Consider the following 519-residue polypeptide: Na(+)/H(+) exchange regulatory cofactor NHE-RF3 (519 aa).

The region spanning 9-90 (ECKLSKQEGQ…SVTLLVLDGD (82 aa)) is the PDZ 1 domain. Phosphoserine occurs at positions 108, 148, 192, 250, 334, and 348. 2 consecutive PDZ domains span residues 128 to 215 (EPCA…VDKE) and 243 to 323 (VVVI…LDKE). Residues 348-374 (SVKEGPAPIPAPLEATGSEPTEDAEGH) are disordered. The 81-residue stretch at 378-458 (LCRLLKEDDS…HVTLLVCGKM (81 aa)) folds into the PDZ 4 domain. Thr451 and Thr488 each carry phosphothreonine. The interval 479–519 (VAGPDEKGETSAESEHDAHPAKDRTLSTASHSSSNSEDTEM) is disordered. Residues 482-503 (PDEKGETSAESEHDAHPAKDRT) are compositionally biased toward basic and acidic residues. A phosphoserine mark is found at Ser489 and Ser492. Thr503 carries the post-translational modification Phosphothreonine. Low complexity predominate over residues 505–519 (STASHSSSNSEDTEM). Phosphoserine occurs at positions 508, 510, 511, 512, and 514.

Belongs to the NHER family. As to quaternary structure, interacts with PDZK1IP1 and ABCC2. Binds to the C-terminal region of SLC26A3. Interacts (via C-terminal PDZ domain) with SLC26A6 (via C-terminal domain). Interacts (via C-terminal PDZ domain) with SLC9A3 (via C-terminal domain). Component of a complex, composed of PDZK1, SYNGAP1, KLHL17 and NMDA receptors. Interacts (via PDZ1 domain) directly with KLHL17; the interaction is important for integrity of actin cytoskeleton structures in neurons. Forms a heterodimeric complex with NHERF1. Interacts with AKAP2, BCR, CFTR, SLCO1A1, SLC22A12, SLC22A4, SLC22A5, SLC26A6, NHERF2 and SLC17A1. Interacts (via the first PDZ domain) with PTGIR (via non-isoprenylated C-terminus). Interacts (via PDZ domains 1 and 3) with SCARB1 (C-terminal domain). Interacts (via PDZ domains 1 and 3) with SLC5A8 (via PDZ-binding motif); interaction increases nicotinate transport activity of SLC5A8. As to expression, expressed in kidney, liver, small intestine. brain, lung, and testis (at protein level).

The protein resides in the membrane. The protein localises to the cell membrane. Its function is as follows. A scaffold protein that connects plasma membrane proteins and regulatory components, regulating their surface expression in epithelial cells apical domains. May be involved in the coordination of a diverse range of regulatory processes for ion transport and second messenger cascades. In complex with NHERF1, may cluster proteins that are functionally dependent in a mutual fashion and modulate the trafficking and the activity of the associated membrane proteins. May play a role in the cellular mechanisms associated with multidrug resistance through its interaction with ABCC2 and PDZK1IP1. May potentiate the CFTR chloride channel activity. Required for normal cell-surface expression of SCARB1. Plays a role in maintaining normal plasma cholesterol levels via its effects on SCARB1. Plays a role in the normal localization and function of the chloride-anion exchanger SLC26A6 to the plasma membrane in the brush border of the proximal tubule of the kidney. May be involved in the regulation of proximal tubular Na(+)-dependent inorganic phosphate cotransport therefore playing an important role in tubule function. The protein is Na(+)/H(+) exchange regulatory cofactor NHE-RF3 (Pdzk1) of Mus musculus (Mouse).